Consider the following 206-residue polypeptide: Anti-sigma-W factor RsiW (206 aa).

At 1-87 (MSCPEHIVQL…ASINRWLKAH (87 aa)) the chain is on the cytoplasmic side. Positions 30, 34, and 37 each coordinate Zn(2+). Residues 88-108 (PFLVAAALFAILMGGSFFSSW) form a helical membrane-spanning segment. Residues 109–206 (KNDHDFSVSS…SVFGVKESKE (98 aa)) lie on the Extracellular side of the membrane.

It belongs to the zinc-associated anti-sigma factor (ZAS) superfamily. Anti-sigma-W factor family. The cofactor is Zn(2+). Post-translationally, is processed by three successive proteolytic events. First, the extracellular region of RsiW is cleaved by PrsW (Site-1 cleavage) in response to cell envelope stresses. Next, it undergoes cleavage at an intramembrane site (Site-2 cleavage) mediated by RasP. This cleavage uncovers a cryptic proteolytic tag with conserved alanine residues in the transmembrane segment, that is recognized mainly by the ClpXP protease, which completely degrades the protein in the cytoplasm and leads to the induction of the sigma-W-controlled genes.

It is found in the membrane. In terms of biological role, is the anti-sigma factor for SigW. The presence of RsiW leads to the inactivation of SigW, and its proteolytic destruction to sigma-W activation. The polypeptide is Anti-sigma-W factor RsiW (rsiW) (Bacillus licheniformis (strain ATCC 14580 / DSM 13 / JCM 2505 / CCUG 7422 / NBRC 12200 / NCIMB 9375 / NCTC 10341 / NRRL NRS-1264 / Gibson 46)).